A 292-amino-acid chain; its full sequence is MLNYDKMEKIGEGTYGTVFKARNKNSGEIVALKRVRLDDDDEGVPSSALREICILRELKHRNVVRLYDVVHSENKLTLVFEYCDQDLKKFFDSLNGYMDAQTARSLMLQLLRGLSFCHAHHVLHRDLKPQNLLINTNGTLKLADFGLARAFGVPVRCFSAEVVTLWYRPPDVLFGAKLYNTSIDMWSAGCIFAEISNAGRPLFPGADVDDQLKRIFKQLGSPSEDNWPSITQLPDYKPYPIYHPTLTWSQIVPNLNSRGRDLLQKLLVCNPAGRIDADAALRHAYFADTSDV.

Residues 4–286 (YDKMEKIGEG…ADAALRHAYF (283 aa)) form the Protein kinase domain. ATP-binding positions include 10-18 (IGEGTYGTV) and Lys-33. The active-site Proton acceptor is the Asp-126. Residues Asn-131 and Asp-144 each coordinate Mg(2+).

Belongs to the protein kinase superfamily. CMGC Ser/Thr protein kinase family. CDC2/CDKX subfamily. In terms of assembly, heterodimer composed of a catalytic subunit cdk-5 and a regulatory subunit cdka-1. Interaction with cdka-1 is required for cdk-5 activation. Requires Mg(2+) as cofactor.

It localises to the cytoplasm. Its subcellular location is the cell projection. It is found in the dendrite. It carries out the reaction L-seryl-[protein] + ATP = O-phospho-L-seryl-[protein] + ADP + H(+). The catalysed reaction is L-threonyl-[protein] + ATP = O-phospho-L-threonyl-[protein] + ADP + H(+). In terms of biological role, proline-directed serine/threonine-protein kinase which, in several motor neurons, promotes the polarized trafficking of synaptic vesicles and dense-core vesicles (DCV). In the ventral nerve cord, phosphorylates lin-10 and thereby prevents lin-10-mediated anterograde trafficking of the glutamate receptor glr-1. Involved in the inhibition of glr-1 trafficking in hypoxic conditions. In DA motor neurons but not in DB motor neurons, regulates axonal transport of synaptic vesicle precursors by inhibiting dynein-mediated retrograde transport. Regulates the trafficking of dense-core vesicles in DA and DB motor neurons by promoting anterograde trafficking to the axon and preventing dynein-dependent trafficking to the dendrite. May regulate these processes in association with cdka-1/p35. Activity may be regulated by cyy-1. Involved in synapse formation during DD motor neuron remodeling by regulating transport of disassembled synaptic material to the new synaptic sites probably by activating the motor protein unc-104/kinesin-3. Regulates microtubule polarity in the dendrite of DB motor neurons. May also play a role in GABAergic synaptic vesicle localization in the ventral nerve cord. The polypeptide is Cyclin-dependent-like kinase 5 (Caenorhabditis elegans).